The chain runs to 758 residues: Thiosulfate reductase molybdopterin-containing subunit PhsA (758 aa).

The tat-type signal signal peptide spans 1 to 30 (MSISRRSFLQGVGIGCSACALGAFPPGALA). Positions 41–97 (TTLTPSLCEMCSFRCPIQAQVVNNKTVFIQGNPSAPQQGTRICARGGSGVSLVNDPQ) constitute a 4Fe-4S Mo/W bis-MGD-type domain. Residues Cys48, Cys51, Cys55, and Cys83 each contribute to the [4Fe-4S] cluster site.

Belongs to the prokaryotic molybdopterin-containing oxidoreductase family. As to quaternary structure, composed of three subunits: PhsA, PhsB and PhsC. Requires [4Fe-4S] cluster as cofactor. It depends on Mo-bis(molybdopterin guanine dinucleotide) as a cofactor. Post-translationally, predicted to be exported by the Tat system. The position of the signal peptide cleavage has not been experimentally proven.

It is found in the periplasm. It carries out the reaction a quinone + hydrogen sulfide + sulfite + 2 H(+) = thiosulfate + a quinol. Its function is as follows. Component of the PhsABC thiosulfate reductase that catalyzes the reduction of thiosulfate to sulfite and hydrogen sulfide, with menaquinol as the sole electron donor. Proton motive force (PMF) is required to drive transmembrane electron transfer within the reductase. The PhsA subunit contains the active site molybdenum-bis(molybdopterin guanine dinucleotide) (Mo-bis-MGD) cofactor. This Salmonella typhimurium (strain LT2 / SGSC1412 / ATCC 700720) protein is Thiosulfate reductase molybdopterin-containing subunit PhsA.